Consider the following 458-residue polypeptide: GTPase Der (458 aa).

2 consecutive EngA-type G domains span residues 4 to 169 (PSIA…PKDF) and 178 to 353 (VMMS…TQHR). Residues 10–17 (GRPNVGKS), 57–61 (DTGGL), 120–123 (NKCE), 184–191 (GRPNVGKS), 231–235 (DTAGI), and 296–299 (NKWD) each bind GTP. The KH-like domain maps to 354 to 439 (MRVTTSVVNE…PIILLWRGKQ (86 aa)).

The protein belongs to the TRAFAC class TrmE-Era-EngA-EngB-Septin-like GTPase superfamily. EngA (Der) GTPase family. As to quaternary structure, associates with the 50S ribosomal subunit.

GTPase that plays an essential role in the late steps of ribosome biogenesis. This Prochlorococcus marinus (strain MIT 9515) protein is GTPase Der.